The primary structure comprises 360 residues: Probable dual-specificity RNA methyltransferase RlmN (360 aa).

The active-site Proton acceptor is Glu103. A Radical SAM core domain is found at 109–342 (HEYGNSVCVT…VTIRREQGHD (234 aa)). Cysteines 116 and 347 form a disulfide. [4Fe-4S] cluster contacts are provided by Cys123, Cys127, and Cys130. S-adenosyl-L-methionine is bound by residues 173-174 (GE), Ser205, 228-230 (SLH), and Asn304. Cys347 serves as the catalytic S-methylcysteine intermediate.

Belongs to the radical SAM superfamily. RlmN family. [4Fe-4S] cluster serves as cofactor.

The protein localises to the cytoplasm. It catalyses the reaction adenosine(2503) in 23S rRNA + 2 reduced [2Fe-2S]-[ferredoxin] + 2 S-adenosyl-L-methionine = 2-methyladenosine(2503) in 23S rRNA + 5'-deoxyadenosine + L-methionine + 2 oxidized [2Fe-2S]-[ferredoxin] + S-adenosyl-L-homocysteine. The enzyme catalyses adenosine(37) in tRNA + 2 reduced [2Fe-2S]-[ferredoxin] + 2 S-adenosyl-L-methionine = 2-methyladenosine(37) in tRNA + 5'-deoxyadenosine + L-methionine + 2 oxidized [2Fe-2S]-[ferredoxin] + S-adenosyl-L-homocysteine. Functionally, specifically methylates position 2 of adenine 2503 in 23S rRNA and position 2 of adenine 37 in tRNAs. This is Probable dual-specificity RNA methyltransferase RlmN from Bacillus pumilus (strain SAFR-032).